Consider the following 545-residue polypeptide: Chaperonin GroEL (545 aa).

ATP contacts are provided by residues 29–32, K50, 86–90, G413, and D495; these read TLGP and DGTTT.

The protein belongs to the chaperonin (HSP60) family. In terms of assembly, forms a cylinder of 14 subunits composed of two heptameric rings stacked back-to-back. Interacts with the co-chaperonin GroES.

Its subcellular location is the cytoplasm. The enzyme catalyses ATP + H2O + a folded polypeptide = ADP + phosphate + an unfolded polypeptide.. Functionally, together with its co-chaperonin GroES, plays an essential role in assisting protein folding. The GroEL-GroES system forms a nano-cage that allows encapsulation of the non-native substrate proteins and provides a physical environment optimized to promote and accelerate protein folding. This chain is Chaperonin GroEL, found in Borreliella afzelii (strain PKo) (Borrelia afzelii).